A 317-amino-acid chain; its full sequence is Ribosomal large subunit pseudouridine synthase D (317 aa).

The region spanning 15–89 is the S4 RNA-binding domain; that stretch reads WRLDRALASL…IPLEIVFEDE (75 aa). Residue Asp141 is part of the active site.

This sequence belongs to the pseudouridine synthase RluA family.

The protein localises to the cytoplasm. It catalyses the reaction uridine(1911/1915/1917) in 23S rRNA = pseudouridine(1911/1915/1917) in 23S rRNA. Functionally, responsible for synthesis of pseudouridine from uracil at positions 1911, 1915 and 1917 in 23S ribosomal RNA. This is Ribosomal large subunit pseudouridine synthase D from Zymomonas mobilis subsp. mobilis (strain ATCC 31821 / ZM4 / CP4).